The following is a 612-amino-acid chain: Cytokine-like nuclear factor N-PAC (612 aa).

A PWWP domain is found at 22–81 (PKDLIWAKMKGFTPWPGMIVEPPLDLLTQQRRANTKCVFFFGSRNFAWIEENNIKPFEGP). Residues 168–270 (AVEGENNADS…GASSSSPTAR (103 aa)) are disordered. Low complexity-rich tracts occupy residues 177–193 (SSAS…TAKS) and 201–220 (AKPV…TTKS). Polar residues predominate over residues 228 to 240 (AHQTPTGANTSGL). Residues 276–279 (DDLL) are interaction with histone H3. The tract at residues 319–612 (RDIVPSELTF…SSAVFVRSRF (294 aa)) is dehydrogenase domain. NAD(+) is bound by residues 329–343 (GFLG…IVKD), Thr-421, and Arg-564.

Belongs to the HIBADH-related family. NP60 subfamily. As to quaternary structure, binds to mononucleosomes. Interacts with male-specific lethal (MSL) histone acetyltransferase complex at least composed of mof, msl-1, msl-2 and msl-3.

Its subcellular location is the chromosome. Nucleosome-destabilizing factor that is recruited to genes during transcriptional activation and colocalizes with a subset of trimethylated 'Lys-36' histone H3 (H3K36me3)-enriched regions. Binds DNA (in vitro). Facilitates Pol II transcription through nucleosomes. Facilitates male-specific lethal (MSL) histone acetyltransferase complex targeting to active genes on the X chromosome. Stimulates the acetylation of 'Lys-56' of nucleosomal histone H3 (H3K56ac) by nej. This Drosophila pseudoobscura pseudoobscura (Fruit fly) protein is Cytokine-like nuclear factor N-PAC.